Consider the following 226-residue polypeptide: 2-C-methyl-D-erythritol 4-phosphate cytidylyltransferase (226 aa).

Belongs to the IspD/TarI cytidylyltransferase family. IspD subfamily.

The enzyme catalyses 2-C-methyl-D-erythritol 4-phosphate + CTP + H(+) = 4-CDP-2-C-methyl-D-erythritol + diphosphate. It functions in the pathway isoprenoid biosynthesis; isopentenyl diphosphate biosynthesis via DXP pathway; isopentenyl diphosphate from 1-deoxy-D-xylulose 5-phosphate: step 2/6. Its function is as follows. Catalyzes the formation of 4-diphosphocytidyl-2-C-methyl-D-erythritol from CTP and 2-C-methyl-D-erythritol 4-phosphate (MEP). In Rhodococcus jostii (strain RHA1), this protein is 2-C-methyl-D-erythritol 4-phosphate cytidylyltransferase.